Consider the following 360-residue polypeptide: 1-aminocyclopropane-1-carboxylate oxidase homolog 6 (360 aa).

Residues 208–309 (KGLLLLCHYY…ISVASFFSTS (102 aa)) form the Fe2OG dioxygenase domain. Positions 232, 234, and 288 each coordinate Fe cation. Arg299 provides a ligand contact to 2-oxoglutarate.

It belongs to the iron/ascorbate-dependent oxidoreductase family. The cofactor is Fe(2+). As to expression, constitutively expressed in leaves and blades.

The sequence is that of 1-aminocyclopropane-1-carboxylate oxidase homolog 6 from Arabidopsis thaliana (Mouse-ear cress).